We begin with the raw amino-acid sequence, 307 residues long: Ribosomal RNA small subunit methyltransferase A (307 aa).

Residues Asn-35, Val-37, Gly-62, Glu-83, Asp-113, and Asn-136 each contribute to the S-adenosyl-L-methionine site.

Belongs to the class I-like SAM-binding methyltransferase superfamily. rRNA adenine N(6)-methyltransferase family. RsmA subfamily.

It localises to the cytoplasm. It carries out the reaction adenosine(1518)/adenosine(1519) in 16S rRNA + 4 S-adenosyl-L-methionine = N(6)-dimethyladenosine(1518)/N(6)-dimethyladenosine(1519) in 16S rRNA + 4 S-adenosyl-L-homocysteine + 4 H(+). Its function is as follows. Specifically dimethylates two adjacent adenosines (A1518 and A1519) in the loop of a conserved hairpin near the 3'-end of 16S rRNA in the 30S particle. May play a critical role in biogenesis of 30S subunits. The polypeptide is Ribosomal RNA small subunit methyltransferase A (Bifidobacterium longum (strain DJO10A)).